A 503-amino-acid polypeptide reads, in one-letter code: MDLMSLTAVELGKKIQAKEVTVEEAVKAAIASIKAKEEKINSFVTIDEEGALKKAAEVQAKIDAGELKGALAGVPVAIKDNMCTEGLLTTCSSKILYNFIPTYTAEAVKRLEDAGCVIVGKTNMDEFAMGSTTETSAFGATKNPWNTEHVPGGSSGGSCAAVAAEEVPFALGSDTGGSIRQPSSFCGVTGIKPTYGTVSRYGLIAYGSSLDQIGPIAKDVTDCAIILEAIASYDTKDSTSVNRDDLKFTEALVDDVKGMKIGIPKDYLGDGLDPEVKSAILAAADELKKKGAVVEEFDLGLVEYAIPAYYVIACAEASSNLARFDGVKYGYRTKEYTDLHNMYKKSRSEGFGPEVKRRIMLGSFVLSSGYYDAYYLKALRVKALIKKAFDDAFAKYDVILGPAAPTTAPKLGESLSDPIQMYLGDIYTISVNLAGLPGISLPCGMDKNGLPIGLQLIGDCFKEKNIIRAAYSFEKTRELKRSTIAEEYSNKNTADTNKSAGAQ.

Catalysis depends on charge relay system residues lysine 79 and serine 154. Residue serine 178 is the Acyl-ester intermediate of the active site.

Belongs to the amidase family. GatA subfamily. Heterotrimer of A, B and C subunits.

The catalysed reaction is L-glutamyl-tRNA(Gln) + L-glutamine + ATP + H2O = L-glutaminyl-tRNA(Gln) + L-glutamate + ADP + phosphate + H(+). Functionally, allows the formation of correctly charged Gln-tRNA(Gln) through the transamidation of misacylated Glu-tRNA(Gln) in organisms which lack glutaminyl-tRNA synthetase. The reaction takes place in the presence of glutamine and ATP through an activated gamma-phospho-Glu-tRNA(Gln). The protein is Glutamyl-tRNA(Gln) amidotransferase subunit A of Agathobacter rectalis (strain ATCC 33656 / DSM 3377 / JCM 17463 / KCTC 5835 / VPI 0990) (Eubacterium rectale).